The sequence spans 82 residues: RNA-binding protein Hfq (82 aa).

Positions 9–68 constitute a Sm domain; sequence DPYLNTLRKERVPVSIYLVNGIKLQGQIESFDQFVILLKNTVSQMVYKHAISTVVPSRPV.

This sequence belongs to the Hfq family. As to quaternary structure, homohexamer.

Its function is as follows. RNA chaperone that binds small regulatory RNA (sRNAs) and mRNAs to facilitate mRNA translational regulation in response to envelope stress, environmental stress and changes in metabolite concentrations. Also binds with high specificity to tRNAs. The polypeptide is RNA-binding protein Hfq (Pseudomonas aeruginosa (strain LESB58)).